The primary structure comprises 949 residues: Glycine dehydrogenase (decarboxylating) (949 aa).

Lysine 704 bears the N6-(pyridoxal phosphate)lysine mark.

It belongs to the GcvP family. As to quaternary structure, the glycine cleavage system is composed of four proteins: P, T, L and H. It depends on pyridoxal 5'-phosphate as a cofactor.

It carries out the reaction N(6)-[(R)-lipoyl]-L-lysyl-[glycine-cleavage complex H protein] + glycine + H(+) = N(6)-[(R)-S(8)-aminomethyldihydrolipoyl]-L-lysyl-[glycine-cleavage complex H protein] + CO2. Functionally, the glycine cleavage system catalyzes the degradation of glycine. The P protein binds the alpha-amino group of glycine through its pyridoxal phosphate cofactor; CO(2) is released and the remaining methylamine moiety is then transferred to the lipoamide cofactor of the H protein. The protein is Glycine dehydrogenase (decarboxylating) of Bacteroides thetaiotaomicron (strain ATCC 29148 / DSM 2079 / JCM 5827 / CCUG 10774 / NCTC 10582 / VPI-5482 / E50).